The chain runs to 436 residues: ATP-dependent protease ATPase subunit HslU (436 aa).

Residues I18, 60-65 (GVGKTE), D250, E314, and R386 each bind ATP.

This sequence belongs to the ClpX chaperone family. HslU subfamily. A double ring-shaped homohexamer of HslV is capped on each side by a ring-shaped HslU homohexamer. The assembly of the HslU/HslV complex is dependent on binding of ATP.

The protein localises to the cytoplasm. ATPase subunit of a proteasome-like degradation complex; this subunit has chaperone activity. The binding of ATP and its subsequent hydrolysis by HslU are essential for unfolding of protein substrates subsequently hydrolyzed by HslV. HslU recognizes the N-terminal part of its protein substrates and unfolds these before they are guided to HslV for hydrolysis. The chain is ATP-dependent protease ATPase subunit HslU from Mesorhizobium japonicum (strain LMG 29417 / CECT 9101 / MAFF 303099) (Mesorhizobium loti (strain MAFF 303099)).